The chain runs to 571 residues: Plastidial pyruvate kinase 3, chloroplastic (571 aa).

The N-terminal 55 residues, 1 to 55, are a transit peptide targeting the chloroplast; it reads MAAYGQISSGMTVDPQVLSSSRNIGVSLSPLRRTLIGAGVRSTSISLRQCSLSVR. Arg129 serves as a coordination point for substrate. Residues Asn131, Ser133, Asp164, and Thr165 each coordinate K(+). Position 131-134 (131-134) interacts with ATP; the sequence is NMSH. Arg171 is an ATP binding site. Lys314 is a binding site for substrate. A Mg(2+)-binding site is contributed by Glu316. The substrate site is built by Gly339, Asp340, and Thr372. Position 340 (Asp340) interacts with Mg(2+).

The protein belongs to the pyruvate kinase family. Oligomer of alpha and beta subunits. Requires Mg(2+) as cofactor. K(+) is required as a cofactor. As to expression, expressed at low levels in roots, leaves, inflorescences, siliques, pollen, seeds and flowers.

The protein resides in the plastid. Its subcellular location is the chloroplast stroma. It catalyses the reaction pyruvate + ATP = phosphoenolpyruvate + ADP + H(+). It participates in carbohydrate degradation; glycolysis; pyruvate from D-glyceraldehyde 3-phosphate: step 5/5. Functionally, required for plastidial pyruvate kinase activity. This is Plastidial pyruvate kinase 3, chloroplastic (PKP3) from Arabidopsis thaliana (Mouse-ear cress).